Consider the following 690-residue polypeptide: Eukaryotic translation initiation factor 3 subunit B (690 aa).

Residues 1 to 11 (MAKKKSEEHSG) show a composition bias toward basic and acidic residues. The disordered stretch occupies residues 1-36 (MAKKKSEEHSGADANDSDYQEEPNFEDPPGFVDNIS). Residues 15 to 25 (NDSDYQEEPNF) show a composition bias toward acidic residues. The region spanning 57–141 (SVVVVDNIPK…HTFAVNLFTD (85 aa)) is the RRM domain. WD repeat units follow at residues 207–246 (TRER…KIQK), 293–331 (DGMS…LLDL), 334–369 (IKIP…TLME), 442–484 (EIRE…KPSL), and 530–575 (PDHF…IKRT). Residues 595–645 (EEKQKEIKKNLKKYYAAFEQKDRLRLTRASKELLEKRSQLRETFMEYRNKR) adopt a coiled-coil conformation.

It belongs to the eIF-3 subunit B family. As to quaternary structure, component of the eukaryotic translation initiation factor 3 (eIF-3) complex. The eIF-3 complex interacts with pix. Interacts with mxt.

The protein localises to the cytoplasm. RNA-binding component of the eukaryotic translation initiation factor 3 (eIF-3) complex, which is involved in protein synthesis of a specialized repertoire of mRNAs and, together with other initiation factors, stimulates binding of mRNA and methionyl-tRNAi to the 40S ribosome. The eIF-3 complex specifically targets and initiates translation of a subset of mRNAs involved in cell proliferation. In Drosophila simulans (Fruit fly), this protein is Eukaryotic translation initiation factor 3 subunit B.